Here is a 29-residue protein sequence, read N- to C-terminus: uncharacterized protein (29 aa).

A helical membrane pass occupies residues 7 to 27 (FSLVTTIIVLGLIVAVGLTAA).

The protein localises to the cell inner membrane. This is an uncharacterized protein from Escherichia coli O6:K15:H31 (strain 536 / UPEC).